We begin with the raw amino-acid sequence, 299 residues long: Dye-decolorizing peroxidase YfeX (299 aa).

The Proton acceptor role is filled by D143. Heme is bound at residue H215.

It belongs to the DyP-type peroxidase family. Heme b is required as a cofactor.

The protein localises to the cytoplasm. In terms of biological role, has both general peroxidase activity and dye-decolorizing activity. Can catalyze the oxidation of both protoporphyrinogen IX and coproporphyrinogen III to their corresponding porphyrins. Also efficiently decolorizes the dyes alizarin red and Cibacron blue F3GA. The polypeptide is Dye-decolorizing peroxidase YfeX (yfeX) (Escherichia coli (strain K12)).